The sequence spans 61 residues: DNA-directed RNA polymerase subunit Rpo6 (61 aa).

It belongs to the archaeal Rpo6/eukaryotic RPB6 RNA polymerase subunit family. In terms of assembly, part of the RNA polymerase complex.

It is found in the cytoplasm. It catalyses the reaction RNA(n) + a ribonucleoside 5'-triphosphate = RNA(n+1) + diphosphate. Its function is as follows. DNA-dependent RNA polymerase (RNAP) catalyzes the transcription of DNA into RNA using the four ribonucleoside triphosphates as substrates. The sequence is that of DNA-directed RNA polymerase subunit Rpo6 from Methanothermobacter thermautotrophicus (strain ATCC 29096 / DSM 1053 / JCM 10044 / NBRC 100330 / Delta H) (Methanobacterium thermoautotrophicum).